The following is a 171-amino-acid chain: Co-chaperone protein HscB homolog (171 aa).

The J domain maps to N2–E74.

It belongs to the HscB family. In terms of assembly, interacts with HscA and stimulates its ATPase activity.

Co-chaperone involved in the maturation of iron-sulfur cluster-containing proteins. Seems to help targeting proteins to be folded toward HscA. The protein is Co-chaperone protein HscB homolog of Vibrio parahaemolyticus serotype O3:K6 (strain RIMD 2210633).